Reading from the N-terminus, the 1066-residue chain is Beta-galactosidase (1066 aa).

Asn110 and Asp209 together coordinate substrate. Asp209 provides a ligand contact to Na(+). Residues Glu432, His434, and Glu477 each coordinate Mg(2+). Residues Glu477 and 553 to 556 (EYAH) each bind substrate. Catalysis depends on Glu477, which acts as the Proton donor. The Nucleophile role is filled by Glu553. Asn613 provides a ligand contact to Mg(2+). The Na(+) site is built by Phe617 and Asn620. Substrate contacts are provided by Asn620 and Trp1041.

The protein belongs to the glycosyl hydrolase 2 family. Homotetramer. Requires Mg(2+) as cofactor. Na(+) serves as cofactor.

It catalyses the reaction Hydrolysis of terminal non-reducing beta-D-galactose residues in beta-D-galactosides.. The polypeptide is Beta-galactosidase (Yersinia pseudotuberculosis serotype IB (strain PB1/+)).